We begin with the raw amino-acid sequence, 214 residues long: Redox-sensing transcriptional repressor Rex (214 aa).

A DNA-binding region (H-T-H motif) is located at residues 17–56 (LYYRIFKRFHADQVEKASSKQIADAMGIDSATVRRDFSYF). 91–96 (GCGNIG) is an NAD(+) binding site.

It belongs to the transcriptional regulatory Rex family. Homodimer.

Its subcellular location is the cytoplasm. In terms of biological role, modulates transcription in response to changes in cellular NADH/NAD(+) redox state. The polypeptide is Redox-sensing transcriptional repressor Rex (Streptococcus pyogenes serotype M12 (strain MGAS9429)).